The primary structure comprises 271 residues: Hydroxyethylthiazole kinase (271 aa).

Methionine 50 serves as a coordination point for substrate. The ATP site is built by arginine 126 and threonine 172. Position 199 (glycine 199) interacts with substrate.

It belongs to the Thz kinase family. It depends on Mg(2+) as a cofactor.

It catalyses the reaction 5-(2-hydroxyethyl)-4-methylthiazole + ATP = 4-methyl-5-(2-phosphooxyethyl)-thiazole + ADP + H(+). Its pathway is cofactor biosynthesis; thiamine diphosphate biosynthesis; 4-methyl-5-(2-phosphoethyl)-thiazole from 5-(2-hydroxyethyl)-4-methylthiazole: step 1/1. Its function is as follows. Catalyzes the phosphorylation of the hydroxyl group of 4-methyl-5-beta-hydroxyethylthiazole (THZ). This is Hydroxyethylthiazole kinase from Akkermansia muciniphila (strain ATCC BAA-835 / DSM 22959 / JCM 33894 / BCRC 81048 / CCUG 64013 / CIP 107961 / Muc).